A 240-amino-acid chain; its full sequence is Uridylate kinase (240 aa).

Residue 15–18 participates in ATP binding; sequence KLSG. The tract at residues 23 to 28 is involved in allosteric activation by GTP; that stretch reads GSEGFG. Gly57 is a UMP binding site. Residues Gly58 and Arg62 each contribute to the ATP site. Residues Asp77 and 138 to 145 contribute to the UMP site; that span reads TGNPFFTT. Thr165, Tyr171, and Asp174 together coordinate ATP.

This sequence belongs to the UMP kinase family. In terms of assembly, homohexamer.

Its subcellular location is the cytoplasm. It carries out the reaction UMP + ATP = UDP + ADP. The protein operates within pyrimidine metabolism; CTP biosynthesis via de novo pathway; UDP from UMP (UMPK route): step 1/1. With respect to regulation, allosterically activated by GTP. Inhibited by UTP. In terms of biological role, catalyzes the reversible phosphorylation of UMP to UDP. This is Uridylate kinase from Photobacterium profundum (strain SS9).